The following is a 380-amino-acid chain: Glutamate 5-kinase (380 aa).

Lys-15 is an ATP binding site. Substrate contacts are provided by Ser-59, Asp-146, and Asn-158. 178 to 179 (TD) is an ATP binding site. One can recognise a PUA domain in the interval 285–363 (RGSVTVDAGA…AEFERLLGYA (79 aa)).

It belongs to the glutamate 5-kinase family.

Its subcellular location is the cytoplasm. It catalyses the reaction L-glutamate + ATP = L-glutamyl 5-phosphate + ADP. Its pathway is amino-acid biosynthesis; L-proline biosynthesis; L-glutamate 5-semialdehyde from L-glutamate: step 1/2. Its function is as follows. Catalyzes the transfer of a phosphate group to glutamate to form L-glutamate 5-phosphate. The sequence is that of Glutamate 5-kinase from Acidovorax ebreus (strain TPSY) (Diaphorobacter sp. (strain TPSY)).